We begin with the raw amino-acid sequence, 87 residues long: Small ribosomal subunit protein uS17 (87 aa).

Belongs to the universal ribosomal protein uS17 family. In terms of assembly, part of the 30S ribosomal subunit.

One of the primary rRNA binding proteins, it binds specifically to the 5'-end of 16S ribosomal RNA. This is Small ribosomal subunit protein uS17 from Bacillus thuringiensis (strain Al Hakam).